Here is a 631-residue protein sequence, read N- to C-terminus: 1,4-alpha-glucan branching enzyme GlgB (631 aa).

The active-site Nucleophile is aspartate 309. The active-site Proton donor is the glutamate 362.

This sequence belongs to the glycosyl hydrolase 13 family. GlgB subfamily. As to quaternary structure, monomer.

The catalysed reaction is Transfers a segment of a (1-&gt;4)-alpha-D-glucan chain to a primary hydroxy group in a similar glucan chain.. It participates in glycan biosynthesis; glycogen biosynthesis. Functionally, catalyzes the formation of the alpha-1,6-glucosidic linkages in glycogen by scission of a 1,4-alpha-linked oligosaccharide from growing alpha-1,4-glucan chains and the subsequent attachment of the oligosaccharide to the alpha-1,6 position. The chain is 1,4-alpha-glucan branching enzyme GlgB from Marinobacter nauticus (strain ATCC 700491 / DSM 11845 / VT8) (Marinobacter aquaeolei).